The primary structure comprises 348 residues: GTP 3',8-cyclase (348 aa).

Residues 24–242 (PFGRAVTYLR…EKQFTLTDID (219 aa)) form the Radical SAM core domain. Arg-33 is a GTP binding site. Positions 40 and 44 each coordinate [4Fe-4S] cluster. Residue Tyr-46 participates in S-adenosyl-L-methionine binding. Position 47 (Cys-47) interacts with [4Fe-4S] cluster. Arg-82 lines the GTP pocket. Residue Gly-86 participates in S-adenosyl-L-methionine binding. Residue Thr-115 participates in GTP binding. Ser-139 serves as a coordination point for S-adenosyl-L-methionine. Lys-175 contacts GTP. Met-209 contributes to the S-adenosyl-L-methionine binding site. 2 residues coordinate [4Fe-4S] cluster: Cys-272 and Cys-275. 277-279 (RVR) is a binding site for GTP. Cys-289 is a binding site for [4Fe-4S] cluster.

Belongs to the radical SAM superfamily. MoaA family. Monomer and homodimer. It depends on [4Fe-4S] cluster as a cofactor.

It carries out the reaction GTP + AH2 + S-adenosyl-L-methionine = (8S)-3',8-cyclo-7,8-dihydroguanosine 5'-triphosphate + 5'-deoxyadenosine + L-methionine + A + H(+). It participates in cofactor biosynthesis; molybdopterin biosynthesis. In terms of biological role, catalyzes the cyclization of GTP to (8S)-3',8-cyclo-7,8-dihydroguanosine 5'-triphosphate. The protein is GTP 3',8-cyclase of Rhizobium leguminosarum bv. trifolii (strain WSM2304).